The sequence spans 414 residues: L-cysteine:1D-myo-inositol 2-amino-2-deoxy-alpha-D-glucopyranoside ligase (414 aa).

Residues Met-1–Arg-38 form a disordered region. The segment covering Asn-11 to Arg-38 has biased composition (low complexity). Residue Cys-48 coordinates Zn(2+). L-cysteinyl-5'-AMP-binding positions include Cys-48 to Thr-51, Thr-63, and Asn-86 to Thr-88. The short motif at Ile-50–His-60 is the 'HIGH' region element. Positions Glu-188–Pro-193 match the 'ERGGDP' region motif. Residue Trp-228 participates in L-cysteinyl-5'-AMP binding. Position 232 (Cys-232) interacts with Zn(2+). Gly-250 to Asp-252 is a binding site for L-cysteinyl-5'-AMP. Position 257 (His-257) interacts with Zn(2+). An L-cysteinyl-5'-AMP-binding site is contributed by Val-284. Positions Lys-290–Ser-294 match the 'KMSKS' region motif.

It belongs to the class-I aminoacyl-tRNA synthetase family. MshC subfamily. In terms of assembly, monomer. Requires Zn(2+) as cofactor.

It catalyses the reaction 1D-myo-inositol 2-amino-2-deoxy-alpha-D-glucopyranoside + L-cysteine + ATP = 1D-myo-inositol 2-(L-cysteinylamino)-2-deoxy-alpha-D-glucopyranoside + AMP + diphosphate + H(+). In terms of biological role, catalyzes the ATP-dependent condensation of GlcN-Ins and L-cysteine to form L-Cys-GlcN-Ins. This is L-cysteine:1D-myo-inositol 2-amino-2-deoxy-alpha-D-glucopyranoside ligase from Thermomonospora curvata (strain ATCC 19995 / DSM 43183 / JCM 3096 / KCTC 9072 / NBRC 15933 / NCIMB 10081 / Henssen B9).